We begin with the raw amino-acid sequence, 513 residues long: Probable tubulin polyglutamylase ttll-15 (513 aa).

The TTL domain maps to 73–411; it reads VTGSYESAHT…STPITKEADI (339 aa). ATP contacts are provided by residues 216-219, lysine 229, and aspartate 231; that span reads QKFV.

This sequence belongs to the tubulin--tyrosine ligase family. As to expression, expressed in hypodermis and pharyngeal muscles.

Functionally, probable polyglutamylase that forms polyglutamate side chains on tubulin. Probably acts when complexed with other proteins. Appears to be dispensable for polar spindle formation in dividing embryonic cells, for cilia-dependent osmotic avoidance and for male mating behavior. Regulates microtubule dynamics in uterine muscle cells. The polypeptide is Probable tubulin polyglutamylase ttll-15 (Caenorhabditis elegans).